A 154-amino-acid chain; its full sequence is Endoribonuclease YbeY (154 aa).

Positions 113, 117, and 123 each coordinate Zn(2+).

It belongs to the endoribonuclease YbeY family. It depends on Zn(2+) as a cofactor.

The protein localises to the cytoplasm. Its function is as follows. Single strand-specific metallo-endoribonuclease involved in late-stage 70S ribosome quality control and in maturation of the 3' terminus of the 16S rRNA. In Aeromonas hydrophila subsp. hydrophila (strain ATCC 7966 / DSM 30187 / BCRC 13018 / CCUG 14551 / JCM 1027 / KCTC 2358 / NCIMB 9240 / NCTC 8049), this protein is Endoribonuclease YbeY.